The sequence spans 107 residues: CLAVATA3/ESR (CLE)-related protein 13 (107 aa).

The N-terminal stretch at 1-25 is a signal peptide; that stretch reads MATTRVSHVLGFLLWISLLIFVSIG. Residue Asn29 is glycosylated (N-linked (GlcNAc...) asparagine). Positions 79-107 are disordered; it reads ALPAGGSEIDPRYGVEKRLVPSGPNPLHH. Basic and acidic residues predominate over residues 87-97; sequence IDPRYGVEKRL. Pro99 and Pro102 each carry hydroxyproline. The O-linked (Ara...) hydroxyproline glycan is linked to Pro102.

The protein belongs to the CLV3/ESR signal peptide family. The O-glycosylation (arabinosylation) of the hydroxyproline Pro-102 enhances binding affinity of the CLE13p peptide for its receptor. As to expression, mostly expressed in seedlings, roots, flowers, stems and apex, and, to a lower extent, in leaves and siliques.

It localises to the secreted. Its subcellular location is the extracellular space. Extracellular signal peptide that regulates cell fate. Represses root apical meristem maintenance. Regulates the transition of protophloem cells from proliferation to differentiation, thus impinging on postembryonic growth capacity of the root meristem; this signaling pathway requires CRN and CLV2. In Arabidopsis thaliana (Mouse-ear cress), this protein is CLAVATA3/ESR (CLE)-related protein 13.